The following is an 85-amino-acid chain: MANIKSAIKRAKLSEERRAHNASIKSDMRSAVKTVEALVTNNDLENAKEAFKTASKKLDKAARKGLIHQNAAARQKSRLAKQVNA.

The disordered stretch occupies residues 1 to 25 (MANIKSAIKRAKLSEERRAHNASIK).

This sequence belongs to the bacterial ribosomal protein bS20 family.

In terms of biological role, binds directly to 16S ribosomal RNA. The sequence is that of Small ribosomal subunit protein bS20 from Bacillus anthracis (strain A0248).